The sequence spans 398 residues: Ras-related GTP-binding protein C (398 aa).

The segment at 1 to 56 is disordered; sequence MSLQYGAEETPLAGSYGAADSFPKDFGYGVEEEEEEAAAGGGGGAGAGGGCGPGGA. Ser2 carries the post-translational modification N-acetylserine. A phosphoserine mark is found at Ser2 and Ser15. Gly residues predominate over residues 39-55; sequence AGGGGGAGAGGGCGPGG. GDP-binding residues include Arg70, Ser71, Gly72, Lys73, Ser74, and Ser75. Lys73 serves as a coordination point for GTP. GTP is bound by residues Thr89 and Thr95. Residue Thr95 is modified to Phosphothreonine. Positions 177, 178, 180, and 219 each coordinate GDP. A GTP-binding site is contributed by Asp180.

It belongs to the GTR/RAG GTP-binding protein family. Forms a heterodimer with RRAGA, in a sequence-independent manner, and RRAGB. Heterodimerization stabilizes proteins of the heterodimer. The GDP-bound form of RRAGC (in complex with the GTP-bound form of RRAGA or RRAGB), interacts with RPTOR, thereby promoting recruitment of mTORC1 to the lysosomes. Component of the lysosomal folliculin complex (LFC), composed of FLCN, FNIP1 (or FNIP2), RagA/RRAGA or RagB/RRAGB GDP-bound, RagC/RRAGC or RagD/RRAGD GTP-bound, and Ragulator. Interacts with NOL8. Interacts with SH3BP4; the interaction with this negative regulator is most probably direct, preferentially occurs with the inactive GDP-bound form of RRAGB, is negatively regulated by amino acids and prevents interaction with RPTOR. The Rag heterodimer interacts with SLC38A9; the probable amino acid sensor. Interacts with SESN1, SESN2 and SESN3. Interacts with PIP4P1. The GDP-bound form interacts with TFEB. The GDP-bound form interacts with TFE3. Expressed most abundantly in kidney. Moderately expressed in brain, ovary, and testis, and detected at lower levels in heart, liver, and muscle. Not detected in lung, spleen, and small intestine. Widely expressed in tumor cells, with expression being specifically up-regulated in highly metastatic cells.

It localises to the cytoplasm. The protein localises to the nucleus. Its subcellular location is the lysosome membrane. The enzyme catalyses GTP + H2O = GDP + phosphate + H(+). Its activity is regulated as follows. The activation of RagC/RRAGC is mediated by a GTPase activating protein (GAP). In high-amino acid conditions, activated by GTPase activating protein FLCN that stimulates RRAGC GTPase activity to turn it into its active GDP-bound form. In response to amino acid depletion, the GATOR1 complex inactivates RagC/RRAGC by securing the GTP-bound inactive form. In terms of biological role, guanine nucleotide-binding protein that plays a crucial role in the cellular response to amino acid availability through regulation of the mTORC1 signaling cascade. Forms heterodimeric Rag complexes with RagA/RRAGA or RagB/RRAGB and cycles between an inactive GTP-bound and an active GDP-bound form: RagC/RRAGC is in its active form when GDP-bound RagC/RRAGC forms a complex with GTP-bound RagA/RRAGA (or RagB/RRAGB) and in an inactive form when GTP-bound RagC/RRAGC heterodimerizes with GDP-bound RagA/RRAGA (or RagB/RRAGB). In its GDP-bound active form, promotes the recruitment of mTORC1 to the lysosomes and its subsequent activation by the GTPase RHEB. This is a crucial step in the activation of the MTOR signaling cascade by amino acids. Also plays a central role in the non-canonical mTORC1 complex, which acts independently of RHEB and specifically mediates phosphorylation of MiT/TFE factors TFEB and TFE3: GDP-bound RagC/RRAGC mediates recruitment of MiT/TFE factors TFEB and TFE3. The sequence is that of Ras-related GTP-binding protein C from Mus musculus (Mouse).